A 70-amino-acid chain; its full sequence is Brevinin-1PLb (70 aa).

Residues 1–22 (MFTTKKSMLLLFFLGTINLSLC) form the signal peptide. Residues 23 to 44 (EEERNAEEERRDEPDEMNVEVE) constitute a propeptide that is removed on maturation. Residues Cys64 and Cys70 are joined by a disulfide bond.

Expressed by the skin glands.

The protein resides in the secreted. Its function is as follows. Antimicrobial activity against the Gram-negative bacterium E.coli, the Gram-positive bacterium S.aureus and the yeast C.albicans. In Lithobates palustris (Pickerel frog), this protein is Brevinin-1PLb.